The chain runs to 1478 residues: Bud site selection protein 3 homolog (1478 aa).

Disordered regions lie at residues 732–889 (KSKC…PSKG), 1085–1106 (QRDS…HSSN), and 1146–1168 (YSHS…VSAP). Over residues 749–761 (LVSTNDNSRTLSP) the composition is skewed to polar residues. Residues 763-777 (TIISRTPRTISTITP) are compositionally biased toward low complexity. Over residues 786-800 (GQASNSPARGSISTT) the composition is skewed to polar residues. Over residues 1146–1160 (YSHSHDEEIDSEKRA) the composition is skewed to basic and acidic residues.

The protein belongs to the BUD3 family.

The protein localises to the cell tip. Its subcellular location is the cell septum. Functionally, required for proper septum positioning and septum construction during septation. Acts as a landmark to mark sites for future septation, and as part of a scaffold that recruits components of the contractile ring to the site of septation. Not required to determine the site of lateral branch formation. The sequence is that of Bud site selection protein 3 homolog (BUD3) from Eremothecium gossypii (strain ATCC 10895 / CBS 109.51 / FGSC 9923 / NRRL Y-1056) (Yeast).